Here is a 206-residue protein sequence, read N- to C-terminus: dCTP deaminase, dUMP-forming (206 aa).

DCTP-binding positions include 117–122 (RSSFGR), D135, 143–145 (TLE), Q163, Y177, K184, and Q188. The active-site Proton donor/acceptor is the E145.

Belongs to the dCTP deaminase family. Homotrimer.

It catalyses the reaction dCTP + 2 H2O = dUMP + NH4(+) + diphosphate. The protein operates within pyrimidine metabolism; dUMP biosynthesis; dUMP from dCTP: step 1/1. Its function is as follows. Bifunctional enzyme that catalyzes both the deamination of dCTP to dUTP and the hydrolysis of dUTP to dUMP without releasing the toxic dUTP intermediate. The protein is dCTP deaminase, dUMP-forming of Methanococcus maripaludis (strain C5 / ATCC BAA-1333).